The following is a 212-amino-acid chain: GrpE protein homolog, mitochondrial (212 aa).

This sequence belongs to the GrpE family. In terms of assembly, component of the PAM complex, at least composed of mtHsp70, MGE1, TIM44, PAM16, PAM17 and PAM18.

Its subcellular location is the mitochondrion matrix. Essential component of the PAM complex, a complex required for the translocation of transit peptide-containing proteins from the inner membrane into the mitochondrial matrix in an ATP-dependent manner. Seems to control the nucleotide-dependent binding of SSC1 to substrate proteins. In Eremothecium gossypii (strain ATCC 10895 / CBS 109.51 / FGSC 9923 / NRRL Y-1056) (Yeast), this protein is GrpE protein homolog, mitochondrial (mge1).